The following is a 301-amino-acid chain: Mitochondrial ornithine transporter 1 (301 aa).

6 helical membrane passes run 5–25 (PAIQ…ACVL), 68–88 (SPAL…YGFC), 110–130 (AAAG…TELV), 168–188 (GFYH…FFFF), 207–227 (LGPV…WLAV), and 237–257 (IQVL…LSIV). Solcar repeat units lie at residues 7–91 (IQAA…CQQV), 104–197 (LSDL…SRSF), and 207–293 (LGPV…SRKL).

This sequence belongs to the mitochondrial carrier (TC 2.A.29) family. In terms of tissue distribution, widely expressed, with highest levels in the liver, testis and kidney. In the brain, expressed at high levels in the hypothalamus.

It localises to the mitochondrion inner membrane. The protein resides in the mitochondrion membrane. The enzyme catalyses L-citrulline(in) + L-ornithine(out) + H(+)(in) = L-citrulline(out) + L-ornithine(in) + H(+)(out). It catalyses the reaction L-ornithine(in) + L-arginine(out) = L-ornithine(out) + L-arginine(in). The catalysed reaction is L-ornithine(out) + L-lysine(in) = L-ornithine(in) + L-lysine(out). It carries out the reaction L-lysine(out) + H(+)(in) = L-lysine(in) + H(+)(out). The enzyme catalyses L-ornithine(out) + H(+)(in) = L-ornithine(in) + H(+)(out). Inhibited by pyridoxal 5'-phosphate as well as by mercurials (mersalyl, p-chloromercuribenzene sulfonate, and mercuric chloride), N-ethylmaleimide and spermine. In terms of biological role, mitochondrial ornithine-citrulline antiporter. Catalyzes the exchange between cytosolic ornithine and mitochondrial citrulline plus an H(+), the proton compensates the positive charge of ornithine thus leading to an electroneutral transport. Plays a crucial role in the urea cycle, by connecting the cytosolic and the intramitochondrial reactions of the urea cycle. Lysine and arginine are also transported by the antiport mechanism. In addition, catalyzes an electroneutral exchange of ornithine or lysine for H(+), a reaction driven by the pH gradient across the inner membrane. In Mus musculus (Mouse), this protein is Mitochondrial ornithine transporter 1.